Reading from the N-terminus, the 654-residue chain is Glutamyl-tRNA(Gln) amidotransferase subunit B, mitochondrial (654 aa).

The transit peptide at 1–8 (MGRIPTRE) directs the protein to the mitochondrion. Residues 79–101 (DQAKASKAQAKGKKKRSSADNQT) form a disordered region.

This sequence belongs to the GatB/GatE family. GatB subfamily. Subunit of the heterotrimeric GatCAB amidotransferase (AdT) complex, composed of A, B and C subunits.

Its subcellular location is the mitochondrion. It catalyses the reaction L-glutamyl-tRNA(Gln) + L-glutamine + ATP + H2O = L-glutaminyl-tRNA(Gln) + L-glutamate + ADP + phosphate + H(+). In terms of biological role, allows the formation of correctly charged Gln-tRNA(Gln) through the transamidation of misacylated Glu-tRNA(Gln) in the mitochondria. The reaction takes place in the presence of glutamine and ATP through an activated gamma-phospho-Glu-tRNA(Gln). This is Glutamyl-tRNA(Gln) amidotransferase subunit B, mitochondrial from Pyricularia oryzae (strain 70-15 / ATCC MYA-4617 / FGSC 8958) (Rice blast fungus).